The primary structure comprises 128 residues: Large ribosomal subunit protein bL19 (128 aa).

The protein belongs to the bacterial ribosomal protein bL19 family.

This protein is located at the 30S-50S ribosomal subunit interface and may play a role in the structure and function of the aminoacyl-tRNA binding site. The sequence is that of Large ribosomal subunit protein bL19 from Caldicellulosiruptor bescii (strain ATCC BAA-1888 / DSM 6725 / KCTC 15123 / Z-1320) (Anaerocellum thermophilum).